We begin with the raw amino-acid sequence, 479 residues long: Catalase easC (479 aa).

The span at 1–13 shows a compositional bias: polar residues; it reads MASQVSLTAQGSG. A disordered region spans residues 1-28; that stretch reads MASQVSLTAQGSGLSAPLNGPEHLTSTT. Residue histidine 53 is part of the active site. Tyrosine 343 provides a ligand contact to heme. The disordered stretch occupies residues 365-385; the sequence is HAANDAPKTKKPAVPLQKQSR.

Belongs to the catalase family. The cofactor is heme.

It participates in alkaloid biosynthesis; ergot alkaloid biosynthesis. Catalase; part of the gene cluster that mediates the biosynthesis of fungal ergot alkaloid. DmaW catalyzes the first step of ergot alkaloid biosynthesis by condensing dimethylallyl diphosphate (DMAP) and tryptophan to form 4-dimethylallyl-L-tryptophan. The second step is catalyzed by the methyltransferase easF that methylates 4-dimethylallyl-L-tryptophan in the presence of S-adenosyl-L-methionine, resulting in the formation of 4-dimethylallyl-L-abrine. The catalase easC and the FAD-dependent oxidoreductase easE then transform 4-dimethylallyl-L-abrine to chanoclavine-I which is further oxidized by easD in the presence of NAD(+), resulting in the formation of chanoclavine-I aldehyde. Agroclavine dehydrogenase easG then mediates the conversion of chanoclavine-I aldehyde to agroclavine via a non-enzymatic adduct reaction: the substrate is an iminium intermediate that is formed spontaneously from chanoclavine-I aldehyde in the presence of glutathione. Further conversion of agroclavine to paspalic acid is a two-step process involving oxidation of agroclavine to elymoclavine and of elymoclavine to paspalic acid, the second step being performed by the elymoclavine oxidase cloA. However, cloA does not encode a functional enzyme indicating that C.fusiformis terminates its ergot alkaloid pathway at elymoclavine. This Claviceps fusiformis (Ergot fungus) protein is Catalase easC.